The chain runs to 255 residues: Membrane protein insertase YidC 2 (255 aa).

The N-terminal stretch at 1-20 (MKKKLGLLAMVVALMAITAG) is a signal peptide. A lipid anchor (N-palmitoyl cysteine) is attached at C21. C21 carries S-diacylglycerol cysteine lipidation. The next 5 helical transmembrane spans lie at 59–79 (YGLA…PLMI), 129–149 (LAGC…YHAI), 160–180 (FLWF…VAAI), 202–222 (MMLW…PAAL), and 223–243 (SLYW…IKGP).

The protein belongs to the OXA1/ALB3/YidC family. Type 2 subfamily.

It is found in the cell membrane. In terms of biological role, required for the insertion and/or proper folding and/or complex formation of integral membrane proteins into the membrane. Involved in integration of membrane proteins that insert both dependently and independently of the Sec translocase complex, as well as at least some lipoproteins. In Bacillus anthracis, this protein is Membrane protein insertase YidC 2.